Consider the following 448-residue polypeptide: Tryptophan dimethylallyltransferase 1 (448 aa).

L-tryptophan contacts are provided by residues 80–81 (IL) and Glu-89. The substrate site is built by Arg-100, Lys-186, and Tyr-188. Residues Tyr-190 and Arg-249 each contribute to the L-tryptophan site. Substrate is bound by residues Arg-262, Lys-264, Tyr-266, Gln-348, Tyr-350, Tyr-414, and Tyr-418.

This sequence belongs to the tryptophan dimethylallyltransferase family. Homodimer.

The catalysed reaction is L-tryptophan + dimethylallyl diphosphate = 4-(3-methylbut-2-enyl)-L-tryptophan + diphosphate. It participates in alkaloid biosynthesis; ergot alkaloid biosynthesis. In terms of biological role, tryptophan dimethylallyltransferase; part of the gene cluster that mediates the biosynthesis of fungal ergot alkaloid. DmaW catalyzes the first step of ergot alkaloid biosynthesis by condensing dimethylallyl diphosphate (DMAP) and tryptophan to form 4-dimethylallyl-L-tryptophan. The second step is catalyzed by the methyltransferase easF that methylates 4-dimethylallyl-L-tryptophan in the presence of S-adenosyl-L-methionine, resulting in the formation of 4-dimethylallyl-L-abrine. The catalase easC and the FAD-dependent oxidoreductase easE then transform 4-dimethylallyl-L-abrine to chanoclavine-I which is further oxidized by easD in the presence of NAD(+), resulting in the formation of chanoclavine-I aldehyde. Agroclavine dehydrogenase easG then mediates the conversion of chanoclavine-I aldehyde to agroclavine via a non-enzymatic adduct reaction: the substrate is an iminium intermediate that is formed spontaneously from chanoclavine-I aldehyde in the presence of glutathione. The presence of easA is not required to complete this reaction. Further conversion of agroclavine to paspalic acid is a two-step process involving oxidation of agroclavine to elymoclavine and of elymoclavine to paspalic acid, the second step being performed by the elymoclavine oxidase cloA. Paspalic acid is then further converted to D-lysergic acid. Ergopeptines are assembled from D-lysergic acid and three different amino acids by the D-lysergyl-peptide-synthetases composed each of a monomudular and a trimodular nonribosomal peptide synthetase subunit. LpsB and lpsC encode the monomodular subunits responsible for D-lysergic acid activation and incorporation into the ergopeptine backbone. LpsA1 and A2 subunits encode the trimodular nonribosomal peptide synthetase assembling the tripeptide portion of ergopeptines. LpsA1 is responsible for formation of the major ergopeptine, ergotamine, and lpsA2 for alpha-ergocryptine, the minor ergopeptine of the total alkaloid mixture elaborated by C.purpurea. D-lysergyl-tripeptides are assembled by the nonribosomal peptide synthetases and released as N-(D-lysergyl-aminoacyl)-lactams. Cyclolization of the D-lysergyl-tripeptides is performed by the Fe(2+)/2-ketoglutarate-dependent dioxygenase easH which introduces a hydroxyl group into N-(D-lysergyl-aminoacyl)-lactam at alpha-C of the aminoacyl residue followed by spontaneous condensation with the terminal lactam carbonyl group. The sequence is that of Tryptophan dimethylallyltransferase 1 from Claviceps purpurea (strain 20.1) (Ergot fungus).